Here is a 285-residue protein sequence, read N- to C-terminus: Phosphatidylglycerol--prolipoprotein diacylglyceryl transferase (285 aa).

5 consecutive transmembrane segments (helical) span residues 17-37 (ALGLSPIAFDLGVWHLFGLTL), 43-63 (WYALAYITGILLAWRYVLFLL), 78-98 (LVFWSTLGILVGGRLAYVLFY), 113-133 (WEGGMSYHGGMIGVFLAIWWV), and 139-159 (LSWLRIADYIGCAAPIGLFLG). Arg-160 provides a ligand contact to a 1,2-diacyl-sn-glycero-3-phospho-(1'-sn-glycerol). Transmembrane regions (helical) follow at residues 195-215 (LYEAGLEGILLFAFLNYQFFA), 223-243 (GKLAGFFLVGYGLSRFIVEWF), and 256-276 (GLTMGQTLTIPMVIAGLWLII).

The protein belongs to the Lgt family.

The protein localises to the cell inner membrane. The enzyme catalyses L-cysteinyl-[prolipoprotein] + a 1,2-diacyl-sn-glycero-3-phospho-(1'-sn-glycerol) = an S-1,2-diacyl-sn-glyceryl-L-cysteinyl-[prolipoprotein] + sn-glycerol 1-phosphate + H(+). It functions in the pathway protein modification; lipoprotein biosynthesis (diacylglyceryl transfer). Functionally, catalyzes the transfer of the diacylglyceryl group from phosphatidylglycerol to the sulfhydryl group of the N-terminal cysteine of a prolipoprotein, the first step in the formation of mature lipoproteins. This Zymomonas mobilis subsp. mobilis (strain ATCC 31821 / ZM4 / CP4) protein is Phosphatidylglycerol--prolipoprotein diacylglyceryl transferase.